Consider the following 380-residue polypeptide: Ribosomal RNA small subunit methyltransferase, mitochondrial (380 aa).

The N-terminal 26 residues, 1–26 (MILRLKDQTLIKINSTRSYLSSLVFR), are a transit peptide targeting the mitochondrion. Residues His70, Leu72, Gly97, Glu118, Asp146, and Asn161 each coordinate S-adenosyl-L-methionine.

Belongs to the class I-like SAM-binding methyltransferase superfamily. rRNA adenine N(6)-methyltransferase family.

Its subcellular location is the mitochondrion. The enzyme catalyses adenosine(1914)/adenosine(1915) in 18S rRNA + 4 S-adenosyl-L-methionine = N(6)-dimethyladenosine(1914)/N(6)-dimethyladenosine(1915) in 18S rRNA + 4 S-adenosyl-L-homocysteine + 4 H(+). N6-adenine methyltransferase which modifies the AA dinucleotide at the plant mitochondrial 18S rRNA nucleotides A1914 and A1915. Not active as mitochondrial transcription factor. This Arabidopsis thaliana (Mouse-ear cress) protein is Ribosomal RNA small subunit methyltransferase, mitochondrial.